A 364-amino-acid polypeptide reads, in one-letter code: Cobalt-precorrin-5B C(1)-methyltransferase (364 aa).

The protein belongs to the CbiD family.

The enzyme catalyses Co-precorrin-5B + S-adenosyl-L-methionine = Co-precorrin-6A + S-adenosyl-L-homocysteine. The protein operates within cofactor biosynthesis; adenosylcobalamin biosynthesis; cob(II)yrinate a,c-diamide from sirohydrochlorin (anaerobic route): step 6/10. In terms of biological role, catalyzes the methylation of C-1 in cobalt-precorrin-5B to form cobalt-precorrin-6A. The sequence is that of Cobalt-precorrin-5B C(1)-methyltransferase from Pseudomonas entomophila (strain L48).